The sequence spans 252 residues: Phosphate import ATP-binding protein PstB (252 aa).

An ABC transporter domain is found at isoleucine 6–isoleucine 247. An ATP-binding site is contributed by glycine 38 to serine 45.

The protein belongs to the ABC transporter superfamily. Phosphate importer (TC 3.A.1.7) family. In terms of assembly, the complex is composed of two ATP-binding proteins (PstB), two transmembrane proteins (PstC and PstA) and a solute-binding protein (PstS).

Its subcellular location is the cell membrane. The enzyme catalyses phosphate(out) + ATP + H2O = ADP + 2 phosphate(in) + H(+). In terms of biological role, part of the ABC transporter complex PstSACB involved in phosphate import. Responsible for energy coupling to the transport system. The chain is Phosphate import ATP-binding protein PstB from Heliobacterium mobile (Heliobacillus mobilis).